Reading from the N-terminus, the 250-residue chain is Triosephosphate isomerase (250 aa).

Substrate is bound by residues Asn10 and Lys12. His94 functions as the Electrophile in the catalytic mechanism. Glu167 acts as the Proton acceptor in catalysis.

It belongs to the triosephosphate isomerase family. Homodimer.

The protein resides in the cytoplasm. It carries out the reaction D-glyceraldehyde 3-phosphate = dihydroxyacetone phosphate. Its pathway is carbohydrate biosynthesis; gluconeogenesis. The protein operates within carbohydrate degradation; glycolysis; D-glyceraldehyde 3-phosphate from glycerone phosphate: step 1/1. The chain is Triosephosphate isomerase from Taenia solium (Pork tapeworm).